We begin with the raw amino-acid sequence, 416 residues long: Catalase-peroxidase 2 (416 aa).

The first 20 residues, 1-20 (MLLPLIVFLLSVLIHHRIYS), serve as a signal peptide directing secretion.

It belongs to the peroxidase family. Peroxidase/catalase subfamily. Homodimer or homotetramer. The cofactor is heme b. In terms of processing, formation of the three residue Trp-Tyr-Met cross-link is important for the catalase, but not the peroxidase activity of the enzyme.

It catalyses the reaction H2O2 + AH2 = A + 2 H2O. The enzyme catalyses 2 H2O2 = O2 + 2 H2O. In terms of biological role, bifunctional enzyme with both catalase and broad-spectrum peroxidase activity. The protein is Catalase-peroxidase 2 (katG2) of Alkaliphilus metalliredigens (strain QYMF).